The sequence spans 377 residues: Succinyl-diaminopimelate desuccinylase (377 aa).

His-67 contributes to the Zn(2+) binding site. Asp-69 is a catalytic residue. Residue Asp-100 coordinates Zn(2+). Glu-134 functions as the Proton acceptor in the catalytic mechanism. Zn(2+)-binding residues include Glu-135, Glu-163, and His-349.

It belongs to the peptidase M20A family. DapE subfamily. Homodimer. The cofactor is Zn(2+). Requires Co(2+) as cofactor.

It carries out the reaction N-succinyl-(2S,6S)-2,6-diaminopimelate + H2O = (2S,6S)-2,6-diaminopimelate + succinate. It participates in amino-acid biosynthesis; L-lysine biosynthesis via DAP pathway; LL-2,6-diaminopimelate from (S)-tetrahydrodipicolinate (succinylase route): step 3/3. Functionally, catalyzes the hydrolysis of N-succinyl-L,L-diaminopimelic acid (SDAP), forming succinate and LL-2,6-diaminopimelate (DAP), an intermediate involved in the bacterial biosynthesis of lysine and meso-diaminopimelic acid, an essential component of bacterial cell walls. The protein is Succinyl-diaminopimelate desuccinylase of Glaesserella parasuis serovar 5 (strain SH0165) (Haemophilus parasuis).